Consider the following 506-residue polypeptide: Ribose import ATP-binding protein RbsA 2 (506 aa).

ABC transporter domains lie at 5–241 (LRLS…VGRR) and 254–498 (ADAP…TAGT). An ATP-binding site is contributed by 37–44 (GENGAGKS).

It belongs to the ABC transporter superfamily. Ribose importer (TC 3.A.1.2.1) family. The complex is composed of an ATP-binding protein (RbsA), two transmembrane proteins (RbsC) and a solute-binding protein (RbsB).

The protein resides in the cell inner membrane. The catalysed reaction is D-ribose(out) + ATP + H2O = D-ribose(in) + ADP + phosphate + H(+). Functionally, part of the ABC transporter complex RbsABC involved in ribose import. Responsible for energy coupling to the transport system. The chain is Ribose import ATP-binding protein RbsA 2 from Burkholderia cenocepacia (strain HI2424).